Reading from the N-terminus, the 402-residue chain is Flavohemoprotein (402 aa).

A Globin domain is found at 1–136; the sequence is MLSEKTIEIV…IADAFISIEA (136 aa). His85 contributes to the heme b binding site. Residues Tyr95 and Glu135 each act as charge relay system in the active site. The interval 147–402 is reductase; it reads GGWKDFRNFV…EFFGPAASLQ (256 aa). In terms of domain architecture, FAD-binding FR-type spans 150–260; sequence KDFRNFVVVK…SAPAGDFVLN (111 aa). FAD contacts are provided by residues Tyr188 and 204 to 207; that span reads RQYS. Position 273–278 (273–278) interacts with NADP(+); the sequence is GVGITP. 394–397 serves as a coordination point for FAD; the sequence is FFGP.

It belongs to the globin family. Two-domain flavohemoproteins subfamily. In the C-terminal section; belongs to the flavoprotein pyridine nucleotide cytochrome reductase family. Heme b is required as a cofactor. FAD serves as cofactor.

It carries out the reaction 2 nitric oxide + NADPH + 2 O2 = 2 nitrate + NADP(+) + H(+). The catalysed reaction is 2 nitric oxide + NADH + 2 O2 = 2 nitrate + NAD(+) + H(+). In terms of biological role, is involved in NO detoxification in an aerobic process, termed nitric oxide dioxygenase (NOD) reaction that utilizes O(2) and NAD(P)H to convert NO to nitrate, which protects the bacterium from various noxious nitrogen compounds. Therefore, plays a central role in the inducible response to nitrosative stress. This is Flavohemoprotein from Bacillus anthracis.